A 265-amino-acid chain; its full sequence is Neuronal membrane glycoprotein M6-b (265 aa).

A helical membrane pass occupies residues 31 to 51 (GGVPYASLVATILCFSGVALF). N73 is a glycosylation site (N-linked (GlcNAc...) asparagine). The next 2 membrane-spanning stretches (helical) occupy residues 90–110 (VIYG…AEGF) and 136–156 (FVFL…FSAV). N177 carries N-linked (GlcNAc...) asparagine glycosylation. A helical membrane pass occupies residues 224–244 (LFIVACAGAGATVIALLIYMM). S257 is subject to Phosphoserine.

This sequence belongs to the myelin proteolipid protein family. As to quaternary structure, interacts with SERT.

It is found in the membrane. The protein localises to the cell membrane. Functionally, may be involved in neural development. Involved in regulation of osteoblast function and bone formation. Involved in matrix vesicle release by osteoblasts; this function seems to involve maintenance of the actin cytoskeleton. May be involved in cellular trafficking of SERT and thereby in regulation of serotonin uptake. The polypeptide is Neuronal membrane glycoprotein M6-b (GPM6B) (Pongo abelii (Sumatran orangutan)).